The primary structure comprises 398 residues: Isochorismate synthase DhbC (398 aa).

Ser271 is subject to Phosphoserine.

The protein belongs to the isochorismate synthase family.

The catalysed reaction is chorismate = isochorismate. Its pathway is siderophore biosynthesis; bacillibactin biosynthesis. The sequence is that of Isochorismate synthase DhbC (dhbC) from Bacillus subtilis (strain 168).